The following is a 250-amino-acid chain: NADH-quinone oxidoreductase subunit C (250 aa).

This sequence belongs to the complex I 30 kDa subunit family. NDH-1 is composed of 14 different subunits. Subunits NuoB, C, D, E, F, and G constitute the peripheral sector of the complex.

It localises to the cell inner membrane. The catalysed reaction is a quinone + NADH + 5 H(+)(in) = a quinol + NAD(+) + 4 H(+)(out). NDH-1 shuttles electrons from NADH, via FMN and iron-sulfur (Fe-S) centers, to quinones in the respiratory chain. The immediate electron acceptor for the enzyme in this species is believed to be ubiquinone. Couples the redox reaction to proton translocation (for every two electrons transferred, four hydrogen ions are translocated across the cytoplasmic membrane), and thus conserves the redox energy in a proton gradient. The polypeptide is NADH-quinone oxidoreductase subunit C (Xylella fastidiosa (strain M23)).